The following is a 660-amino-acid chain: Probable alpha-galactosidase D (660 aa).

The N-terminal stretch at 1 to 20 (MLLHFILYAALSSVVTSVSL) is a signal peptide. Asn47, Asn91, and Asn129 each carry an N-linked (GlcNAc...) asparagine glycan. The cysteines at positions 124 and 157 are disulfide-linked. Asp155 functions as the Nucleophile in the catalytic mechanism. Residues Asn182 and Asn191 are each glycosylated (N-linked (GlcNAc...) asparagine). Residue 200 to 204 (EWGIS) coordinates substrate. Residue Asp222 is the Proton donor of the active site. N-linked (GlcNAc...) asparagine glycans are attached at residues Asn351, Asn403, Asn460, Asn492, Asn506, Asn514, and Asn584.

The protein belongs to the glycosyl hydrolase 27 family.

It is found in the secreted. The enzyme catalyses Hydrolysis of terminal, non-reducing alpha-D-galactose residues in alpha-D-galactosides, including galactose oligosaccharides, galactomannans and galactolipids.. In terms of biological role, hydrolyzes a variety of simple alpha-D-galactoside as well as more complex molecules such as oligosaccharides and polysaccharides. The chain is Probable alpha-galactosidase D (aglD) from Aspergillus niger (strain ATCC MYA-4892 / CBS 513.88 / FGSC A1513).